Here is a 153-residue protein sequence, read N- to C-terminus: Transcription antitermination protein NusB (153 aa).

The protein belongs to the NusB family.

Involved in transcription antitermination. Required for transcription of ribosomal RNA (rRNA) genes. Binds specifically to the boxA antiterminator sequence of the ribosomal RNA (rrn) operons. The protein is Transcription antitermination protein NusB of Beutenbergia cavernae (strain ATCC BAA-8 / DSM 12333 / CCUG 43141 / JCM 11478 / NBRC 16432 / NCIMB 13614 / HKI 0122).